The primary structure comprises 341 residues: Allergen Mag (341 aa).

In Dermatophagoides farinae (American house dust mite), this protein is Allergen Mag (MAG).